Reading from the N-terminus, the 303-residue chain is UDP-3-O-acyl-N-acetylglucosamine deacetylase (303 aa).

Zn(2+)-binding residues include H78, H237, and D241. Residue H264 is the Proton donor of the active site.

It belongs to the LpxC family. Zn(2+) is required as a cofactor.

The enzyme catalyses a UDP-3-O-[(3R)-3-hydroxyacyl]-N-acetyl-alpha-D-glucosamine + H2O = a UDP-3-O-[(3R)-3-hydroxyacyl]-alpha-D-glucosamine + acetate. It functions in the pathway glycolipid biosynthesis; lipid IV(A) biosynthesis; lipid IV(A) from (3R)-3-hydroxytetradecanoyl-[acyl-carrier-protein] and UDP-N-acetyl-alpha-D-glucosamine: step 2/6. Functionally, catalyzes the hydrolysis of UDP-3-O-myristoyl-N-acetylglucosamine to form UDP-3-O-myristoylglucosamine and acetate, the committed step in lipid A biosynthesis. The sequence is that of UDP-3-O-acyl-N-acetylglucosamine deacetylase from Chromohalobacter salexigens (strain ATCC BAA-138 / DSM 3043 / CIP 106854 / NCIMB 13768 / 1H11).